Here is an 855-residue protein sequence, read N- to C-terminus: Suppressor of tumorigenicity 14 protein (855 aa).

The segment at 1-20 is disordered; the sequence is MGSDRARKGGGGPKDFGAGL. Residues 1-55 are Cytoplasmic-facing; sequence MGSDRARKGGGGPKDFGAGLKYNSRHEKVNGLEEGVEFLPVNNVKKVEKHGPGRW. The helical; Signal-anchor for type II membrane protein transmembrane segment at 56–76 threads the bilayer; it reads VVLAAVLIGLLLVLLGIGFLV. The Extracellular portion of the chain corresponds to 77–855; sequence WHLQYRDVRV…RDWIKENTGV (779 aa). Positions 86-203 constitute an SEA domain; it reads VQKVFNGYMR…TSVVAFPTDS (118 aa). Asn109 is a glycosylation site (N-linked (GlcNAc...) asparagine). Cys214 and Cys244 are joined by a disulfide. 2 CUB domains span residues 214-334 and 340-447; these read CSFG…FFQL and CGGR…YLSY. An N-linked (GlcNAc...) asparagine glycan is attached at Asn302. 15 cysteine pairs are disulfide-bonded: Cys340–Cys366, Cys397–Cys410, Cys453–Cys464, Cys459–Cys477, Cys471–Cys486, Cys488–Cys501, Cys496–Cys514, Cys508–Cys523, Cys525–Cys537, Cys532–Cys550, Cys544–Cys559, Cys567–Cys579, Cys574–Cys593, Cys587–Cys602, and Cys641–Cys657. LDL-receptor class A domains follow at residues 452–487, 487–524, 524–560, and 566–603; these read PCPGQFTCRTGRCIRKELRCDGWADCTDHSDELNCS, SCDAGHQFTCKNKFCKPLFWVCDSVNDCGDNSDEQGCS, SCPAQTFRCSNGKCLSKSQQCNGKDDCGDGSDEASCP, and TCTKHTYRCLNGLCLSKGNPECDGKEDCSDGSDEKDCD. Asn485 carries an N-linked (GlcNAc...) asparagine glycan. In terms of domain architecture, Peptidase S1 spans 615–854; that stretch reads VVGGTDADEG…FRDWIKENTG (240 aa). Catalysis depends on charge relay system residues His656 and Asp711. Asn772 carries an N-linked (GlcNAc...) asparagine glycan. Cystine bridges form between Cys776/Cys790 and Cys801/Cys830. The active-site Charge relay system is the Ser805.

Belongs to the peptidase S1 family. As to quaternary structure, interacts with CDCP1. May interact with TMEFF1. Interacts with iripin-3, a serine protease inhibitor from Ixodes ricinus saliva. Interacts with iripin-1, a serine protease inhibitor from Ixodes ricinus saliva.

The protein resides in the membrane. The enzyme catalyses Cleaves various synthetic substrates with Arg or Lys at the P1 position and prefers small side-chain amino acids, such as Ala and Gly, at the P2 position.. In terms of biological role, exhibits trypsin-like activity as defined by cleavage of synthetic substrates with Arg or Lys as the P1 site. Involved in the terminal differentiation of keratinocytes through prostasin (PRSS8) activation and filaggrin (FLG) processing. Proteolytically cleaves and therefore activates TMPRSS13. This Homo sapiens (Human) protein is Suppressor of tumorigenicity 14 protein (ST14).